The following is a 268-amino-acid chain: Zinc transporter ZupT (268 aa).

The next 8 helical transmembrane spans lie at 5–25 (ILFAFSLTLLAGLATGIGSII), 38–58 (TVSLGFSAGVMLYVSMIEIFV), 72–92 (AGYIWTVIAFFVGIFVIALID), 124–144 (MGLFSALAIGIHNFPEGLATF), 152–172 (TLGISIAVAIAIHNIPEGLAV), 187–207 (FVLSFLSGLAEPIGAIAGFFL), 211–231 (LFTELTFGLVFASVAGIMVYI), and 248–268 (LAIGGLVGGMLVMAVSLLLFL). The Fe(2+) site is built by Asn136 and Glu139. Residues Glu139 and His164 each coordinate Zn(2+). Residues Asn165, Glu168, and Glu197 each coordinate Fe(2+). Residue Glu168 participates in Zn(2+) binding.

Belongs to the ZIP transporter (TC 2.A.5) family. ZupT subfamily.

The protein resides in the cell inner membrane. It catalyses the reaction Zn(2+)(in) = Zn(2+)(out). In terms of biological role, mediates zinc uptake. May also transport other divalent cations. This is Zinc transporter ZupT from Chlorobaculum parvum (strain DSM 263 / NCIMB 8327) (Chlorobium vibrioforme subsp. thiosulfatophilum).